Here is a 335-residue protein sequence, read N- to C-terminus: Aspartate carbamoyltransferase catalytic subunit (335 aa).

Carbamoyl phosphate is bound by residues Arg-54 and Thr-55. Lys-82 contributes to the L-aspartate binding site. Arg-104, His-134, and Gln-137 together coordinate carbamoyl phosphate. L-aspartate contacts are provided by Arg-177 and Arg-232. 2 residues coordinate carbamoyl phosphate: Gly-277 and Pro-278.

This sequence belongs to the aspartate/ornithine carbamoyltransferase superfamily. ATCase family. Heterododecamer (2C3:3R2) of six catalytic PyrB chains organized as two trimers (C3), and six regulatory PyrI chains organized as three dimers (R2).

The enzyme catalyses carbamoyl phosphate + L-aspartate = N-carbamoyl-L-aspartate + phosphate + H(+). It functions in the pathway pyrimidine metabolism; UMP biosynthesis via de novo pathway; (S)-dihydroorotate from bicarbonate: step 2/3. Its function is as follows. Catalyzes the condensation of carbamoyl phosphate and aspartate to form carbamoyl aspartate and inorganic phosphate, the committed step in the de novo pyrimidine nucleotide biosynthesis pathway. The polypeptide is Aspartate carbamoyltransferase catalytic subunit (Paenarthrobacter aurescens (strain TC1)).